Here is a 79-residue protein sequence, read N- to C-terminus: Sec-independent protein translocase protein TatA (79 aa).

A helical transmembrane segment spans residues 1 to 21; that stretch reads MGSLSIWHWIVVIAVVLLLFG. Over residues 42-60 the composition is skewed to basic and acidic residues; that stretch reads GLQDDEKTAEKPDAVKSLD. A disordered region spans residues 42 to 79; sequence GLQDDEKTAEKPDAVKSLDHNATTGTPPNRTDVGSKAV. A compositionally biased stretch (polar residues) spans 61–70; it reads HNATTGTPPN.

Belongs to the TatA/E family. The Tat system comprises two distinct complexes: a TatABC complex, containing multiple copies of TatA, TatB and TatC subunits, and a separate TatA complex, containing only TatA subunits. Substrates initially bind to the TatABC complex, which probably triggers association of the separate TatA complex to form the active translocon.

It is found in the cell inner membrane. Functionally, part of the twin-arginine translocation (Tat) system that transports large folded proteins containing a characteristic twin-arginine motif in their signal peptide across membranes. TatA could form the protein-conducting channel of the Tat system. This is Sec-independent protein translocase protein TatA from Rhodopseudomonas palustris (strain HaA2).